We begin with the raw amino-acid sequence, 347 residues long: tRNA N6-adenosine threonylcarbamoyltransferase (347 aa).

2 residues coordinate Fe cation: histidine 113 and histidine 117. Residues 136–140 (IVSGG), aspartate 170, glycine 183, aspartate 187, and asparagine 282 contribute to the substrate site. Aspartate 310 provides a ligand contact to Fe cation.

It belongs to the KAE1 / TsaD family. Fe(2+) is required as a cofactor.

It localises to the cytoplasm. It catalyses the reaction L-threonylcarbamoyladenylate + adenosine(37) in tRNA = N(6)-L-threonylcarbamoyladenosine(37) in tRNA + AMP + H(+). Required for the formation of a threonylcarbamoyl group on adenosine at position 37 (t(6)A37) in tRNAs that read codons beginning with adenine. Is involved in the transfer of the threonylcarbamoyl moiety of threonylcarbamoyl-AMP (TC-AMP) to the N6 group of A37, together with TsaE and TsaB. TsaD likely plays a direct catalytic role in this reaction. This chain is tRNA N6-adenosine threonylcarbamoyltransferase, found in Bifidobacterium adolescentis (strain ATCC 15703 / DSM 20083 / NCTC 11814 / E194a).